The following is a 354-amino-acid chain: UDP-3-O-acylglucosamine N-acyltransferase (354 aa).

Catalysis depends on H245, which acts as the Proton acceptor.

Belongs to the transferase hexapeptide repeat family. LpxD subfamily. Homotrimer.

The catalysed reaction is a UDP-3-O-[(3R)-3-hydroxyacyl]-alpha-D-glucosamine + a (3R)-hydroxyacyl-[ACP] = a UDP-2-N,3-O-bis[(3R)-3-hydroxyacyl]-alpha-D-glucosamine + holo-[ACP] + H(+). It functions in the pathway bacterial outer membrane biogenesis; LPS lipid A biosynthesis. Its function is as follows. Catalyzes the N-acylation of UDP-3-O-acylglucosamine using 3-hydroxyacyl-ACP as the acyl donor. Is involved in the biosynthesis of lipid A, a phosphorylated glycolipid that anchors the lipopolysaccharide to the outer membrane of the cell. This Anaeromyxobacter dehalogenans (strain 2CP-C) protein is UDP-3-O-acylglucosamine N-acyltransferase.